A 447-amino-acid polypeptide reads, in one-letter code: Tubulin beta-1 chain (447 aa).

GTP is bound by residues glutamine 11, glutamate 69, serine 138, glycine 142, threonine 143, glycine 144, asparagine 204, and asparagine 226. Residue glutamate 69 coordinates Mg(2+). Polar residues predominate over residues 411-427 (AESNMNDLVSEYQQYQD). The segment at 411 to 447 (AESNMNDLVSEYQQYQDATADEEGDYEDEEEQVPEDE) is disordered. Residues 429–447 (TADEEGDYEDEEEQVPEDE) show a composition bias toward acidic residues.

Belongs to the tubulin family. In terms of assembly, dimer of alpha and beta chains. A typical microtubule is a hollow water-filled tube with an outer diameter of 25 nm and an inner diameter of 15 nM. Alpha-beta heterodimers associate head-to-tail to form protofilaments running lengthwise along the microtubule wall with the beta-tubulin subunit facing the microtubule plus end conferring a structural polarity. Microtubules usually have 13 protofilaments but different protofilament numbers can be found in some organisms and specialized cells. It depends on Mg(2+) as a cofactor. In terms of tissue distribution, expressed in leaf sheaths.

Its subcellular location is the cytoplasm. It localises to the cytoskeleton. Tubulin is the major constituent of microtubules, a cylinder consisting of laterally associated linear protofilaments composed of alpha- and beta-tubulin heterodimers. Microtubules grow by the addition of GTP-tubulin dimers to the microtubule end, where a stabilizing cap forms. Below the cap, tubulin dimers are in GDP-bound state, owing to GTPase activity of alpha-tubulin. This Oryza sativa subsp. japonica (Rice) protein is Tubulin beta-1 chain (TUBB1).